Here is a 367-residue protein sequence, read N- to C-terminus: tRNA (cytosine(34)-C(5))-methyltransferase, mitochondrial (367 aa).

Residues 170-176 (CAAPGGK), Glu193, Asp224, and Asp242 each bind S-adenosyl-L-methionine. The active-site Nucleophile is Cys296.

It belongs to the class I-like SAM-binding methyltransferase superfamily. RsmB/NOP family.

The protein localises to the mitochondrion matrix. It catalyses the reaction cytidine(34) in mitochondrial tRNA + S-adenosyl-L-methionine = 5-methylcytidine(34) in mitochondrial tRNA + S-adenosyl-L-homocysteine + H(+). Functionally, mitochondrial tRNA methyltransferase that mediates methylation of cytosine to 5-methylcytosine (m5C) at position 34 of mt-tRNA(Met). mt-tRNA(Met) methylation at cytosine(34) takes place at the wobble position of the anticodon and initiates the formation of 5-formylcytosine (f(5)c) at this position. mt-tRNA(Met) containing the f(5)c modification at the wobble position enables recognition of the AUA codon in addition to the AUG codon, expanding codon recognition in mitochondrial translation. The polypeptide is tRNA (cytosine(34)-C(5))-methyltransferase, mitochondrial (Danio rerio (Zebrafish)).